Consider the following 132-residue polypeptide: Riboflavin kinase (132 aa).

13 to 18 (GLGHGS) contributes to the CDP binding site. Mg(2+) contacts are provided by Thr-40 and Asn-42. FMN contacts are provided by Thr-98 and Glu-106. 111-114 (VYLR) contacts CDP.

The protein belongs to the archaeal riboflavin kinase family. It depends on Mg(2+) as a cofactor.

The enzyme catalyses riboflavin + CTP = CDP + FMN + H(+). The protein operates within cofactor biosynthesis; FMN biosynthesis; FMN from riboflavin (CTP route): step 1/1. Functionally, catalyzes the CTP-dependent phosphorylation of riboflavin (vitamin B2) to form flavin mononucleotide (FMN). In Aeropyrum pernix (strain ATCC 700893 / DSM 11879 / JCM 9820 / NBRC 100138 / K1), this protein is Riboflavin kinase.